Here is a 117-residue protein sequence, read N- to C-terminus: Large ribosomal subunit protein uL18 (117 aa).

This sequence belongs to the universal ribosomal protein uL18 family. In terms of assembly, part of the 50S ribosomal subunit; part of the 5S rRNA/L5/L18/L25 subcomplex. Contacts the 5S and 23S rRNAs.

This is one of the proteins that bind and probably mediate the attachment of the 5S RNA into the large ribosomal subunit, where it forms part of the central protuberance. The polypeptide is Large ribosomal subunit protein uL18 (Proteus mirabilis (strain HI4320)).